A 195-amino-acid chain; its full sequence is MSTVKVNGAKNGGERMVLPAGEAAAKYYPAYRENVPKKARKAVRPTKLRASLAPGTVCILLAGRFRGKRVVVLSQLEDTLVVTGPYKVNGVPIRRVNHRYVIATSAPKIDVSGVSVEKFTKAYFAKQKRSGPVKKDEAFFAENAPKNALPAERIADQKAVDAKLLPAIKAIPNMKEYLAASFALSNGDRPHLMKF.

S105 and S115 each carry phosphoserine.

This sequence belongs to the eukaryotic ribosomal protein eL6 family. In terms of assembly, component of the large ribosomal subunit (LSU). Mature yeast ribosomes consist of a small (40S) and a large (60S) subunit. The 40S small subunit contains 1 molecule of ribosomal RNA (18S rRNA) and at least 33 different proteins. The large 60S subunit contains 3 rRNA molecules (25S, 5.8S and 5S rRNA) and at least 46 different proteins.

The protein localises to the cytoplasm. The protein resides in the nucleus. Its subcellular location is the nucleolus. Functionally, component of the ribosome, a large ribonucleoprotein complex responsible for the synthesis of proteins in the cell. The small ribosomal subunit (SSU) binds messenger RNAs (mRNAs) and translates the encoded message by selecting cognate aminoacyl-transfer RNA (tRNA) molecules. The large subunit (LSU) contains the ribosomal catalytic site termed the peptidyl transferase center (PTC), which catalyzes the formation of peptide bonds, thereby polymerizing the amino acids delivered by tRNAs into a polypeptide chain. The nascent polypeptides leave the ribosome through a tunnel in the LSU and interact with protein factors that function in enzymatic processing, targeting, and the membrane insertion of nascent chains at the exit of the ribosomal tunnel. The protein is Large ribosomal subunit protein eL6 (rpl6) of Schizosaccharomyces pombe (strain 972 / ATCC 24843) (Fission yeast).